Consider the following 425-residue polypeptide: UPF0761 membrane protein PXO_04555 (425 aa).

Helical transmembrane passes span 48–68, 105–125, 154–174, 182–202, 219–239, and 250–270; these read VFALVPLAIVVFGVLSAFPAF, FTVAGMVALVASLLITLHSIE, GTMLAAASMAMAAYVFALPLF, LAEFAWRLAPMAVEFICIVLI, GALLAVILMEIVKWGFGVYLG, and ALSALPILLLWIYLSWVSVLL.

It belongs to the UPF0761 family.

It localises to the cell inner membrane. The protein is UPF0761 membrane protein PXO_04555 of Xanthomonas oryzae pv. oryzae (strain PXO99A).